The following is a 399-amino-acid chain: S-adenosylmethionine synthase (399 aa).

Residue H15 coordinates ATP. D17 is a Mg(2+) binding site. A K(+)-binding site is contributed by E43. Residues E56 and Q99 each contribute to the L-methionine site. The flexible loop stretch occupies residues 99 to 109 (QSPDIADGVDH). Residues 175-177 (DAK), 242-243 (RF), D251, 257-258 (RK), A274, and K278 contribute to the ATP site. D251 provides a ligand contact to L-methionine. K282 is an L-methionine binding site.

Belongs to the AdoMet synthase family. As to quaternary structure, homotetramer; dimer of dimers. Mg(2+) is required as a cofactor. It depends on K(+) as a cofactor.

The protein localises to the cytoplasm. It carries out the reaction L-methionine + ATP + H2O = S-adenosyl-L-methionine + phosphate + diphosphate. The protein operates within amino-acid biosynthesis; S-adenosyl-L-methionine biosynthesis; S-adenosyl-L-methionine from L-methionine: step 1/1. Its function is as follows. Catalyzes the formation of S-adenosylmethionine (AdoMet) from methionine and ATP. The overall synthetic reaction is composed of two sequential steps, AdoMet formation and the subsequent tripolyphosphate hydrolysis which occurs prior to release of AdoMet from the enzyme. In Lactobacillus acidophilus (strain ATCC 700396 / NCK56 / N2 / NCFM), this protein is S-adenosylmethionine synthase.